The primary structure comprises 325 residues: Beta-ketoacyl-[acyl-carrier-protein] synthase III (325 aa).

Catalysis depends on residues Cys119 and His252. Residues 253–257 are ACP-binding; sequence QANLR. Asn282 is a catalytic residue.

The protein belongs to the thiolase-like superfamily. FabH family. As to quaternary structure, homodimer.

It localises to the cytoplasm. The catalysed reaction is malonyl-[ACP] + acetyl-CoA + H(+) = 3-oxobutanoyl-[ACP] + CO2 + CoA. It participates in lipid metabolism; fatty acid biosynthesis. Functionally, catalyzes the condensation reaction of fatty acid synthesis by the addition to an acyl acceptor of two carbons from malonyl-ACP. Catalyzes the first condensation reaction which initiates fatty acid synthesis and may therefore play a role in governing the total rate of fatty acid production. Possesses both acetoacetyl-ACP synthase and acetyl transacylase activities. Its substrate specificity determines the biosynthesis of branched-chain and/or straight-chain of fatty acids. The sequence is that of Beta-ketoacyl-[acyl-carrier-protein] synthase III from Polaromonas naphthalenivorans (strain CJ2).